The primary structure comprises 68 residues: UPF0253 protein AHA_2115 (68 aa).

The protein belongs to the UPF0253 family.

This is UPF0253 protein AHA_2115 from Aeromonas hydrophila subsp. hydrophila (strain ATCC 7966 / DSM 30187 / BCRC 13018 / CCUG 14551 / JCM 1027 / KCTC 2358 / NCIMB 9240 / NCTC 8049).